A 133-amino-acid polypeptide reads, in one-letter code: MKDNIELTIFTPEKNIKIGEIKEVITEGLDGDLAILPNHVNMITYLKPTITKYIDLNGNKNNIFTSSGVLKVEDNKVYIICDASEKPEDIDIKRAENARKRAEERLRNKKEIDVKRAELALFRSIARIKIKEL.

This sequence belongs to the ATPase epsilon chain family. In terms of assembly, F-type ATPases have 2 components, CF(1) - the catalytic core - and CF(0) - the membrane proton channel. CF(1) has five subunits: alpha(3), beta(3), gamma(1), delta(1), epsilon(1). CF(0) has three main subunits: a, b and c.

It localises to the cell membrane. Produces ATP from ADP in the presence of a proton gradient across the membrane. The protein is ATP synthase epsilon chain of Clostridium botulinum (strain ATCC 19397 / Type A).